The sequence spans 191 residues: Large ribosomal subunit protein uL3 (191 aa).

A disordered region spans residues 115 to 137 (GGPASHGSRFHRRHGSIGNREWP).

This sequence belongs to the universal ribosomal protein uL3 family. Part of the 50S ribosomal subunit. Forms a cluster with proteins L14 and L19.

In terms of biological role, one of the primary rRNA binding proteins, it binds directly near the 3'-end of the 23S rRNA, where it nucleates assembly of the 50S subunit. This chain is Large ribosomal subunit protein uL3 (rplC), found in Campylobacter jejuni subsp. jejuni serotype O:2 (strain ATCC 700819 / NCTC 11168).